The sequence spans 664 residues: Macoilin-1 (664 aa).

Transmembrane regions (helical) follow at residues 28–48, 75–95, 120–140, and 154–174; these read TFLY…DFVL, AFSV…LLFI, VCLP…AIRF, and FAAH…KSYV. Residues 206 to 225 are disordered; the sequence is QMLQRQERETEEATSKGMSE. Basic and acidic residues predominate over residues 210–219; sequence RQERETEEAT. Residues asparagine 234, asparagine 336, asparagine 339, asparagine 348, and asparagine 655 are each glycosylated (N-linked (GlcNAc...) asparagine). Disordered stretches follow at residues 315–364 and 644–664; these read VGAG…LAPH and FMDT…PLKK. Residues 334–348 are compositionally biased toward low complexity; sequence SHNSTNGSVPSSSSN. The span at 644-658 shows a compositional bias: polar residues; the sequence is FMDTSPSSLDPNASV.

The protein belongs to the macoilin family.

The protein localises to the nucleus membrane. It is found in the rough endoplasmic reticulum membrane. May play a role in the regulation of neuronal activity. This is Macoilin-1 from Danio rerio (Zebrafish).